An 814-amino-acid chain; its full sequence is DNA replication licensing factor Mcm6 (814 aa).

Residues 152 to 179 (CLDCQTEIRDVEQQFKFTNPTICRNPVC) form a C4-type zinc finger. Residues 339 to 545 (LYQNLINSLF…VVDYAIARKI (207 aa)) form the MCM domain. 6 residues coordinate ATP: S392, T393, A394, K395, S396, and N497. The Arginine finger signature appears at 521–524 (SRFD). 2 residues coordinate ADP: R612 and E615. The tract at residues 656–696 (DIHLDEEEGEENENVMDIGEETPEDTPRTNETEENDQDTPA) is disordered. Acidic residues predominate over residues 659–679 (LDEEEGEENENVMDIGEETPE).

Belongs to the MCM family. As to quaternary structure, component of the Mcm2-7 complex. The complex forms a toroidal hexameric ring with the proposed subunit order Mcm2-Mcm6-Mcm4-Mcm7-Mcm3-Mcm5 (By simililarity). The heterodimers of Mcm4/Mcm6 and Mcm3/Mcm5 interact with Mcm2 and Mcm7.

The protein resides in the nucleus. It catalyses the reaction ATP + H2O = ADP + phosphate + H(+). In terms of biological role, acts as a component of the MCM2-7 complex (MCM complex) which is the replicative helicase essential for 'once per cell cycle' DNA replication initiation and elongation in eukaryotic cells. Core component of CDC45-MCM-GINS (CMG) helicase, the molecular machine that unwinds template DNA during replication, and around which the replisome is built. The active ATPase sites in the MCM2-7 ring are formed through the interaction surfaces of two neighboring subunits such that a critical structure of a conserved arginine finger motif is provided in trans relative to the ATP-binding site of the Walker A box of the adjacent subunit. The six ATPase active sites, however, are likely to contribute differentially to the complex helicase activity. This Anopheles gambiae (African malaria mosquito) protein is DNA replication licensing factor Mcm6.